The sequence spans 298 residues: Aspartate carbamoyltransferase catalytic subunit (298 aa).

Carbamoyl phosphate contacts are provided by Arg50 and Thr51. Lys79 contacts L-aspartate. Carbamoyl phosphate-binding residues include Arg100, His128, and Gln131. L-aspartate contacts are provided by Arg161 and Arg220. Carbamoyl phosphate-binding residues include Leu259 and Pro260.

The protein belongs to the aspartate/ornithine carbamoyltransferase superfamily. ATCase family. In terms of assembly, heterooligomer of catalytic and regulatory chains.

The enzyme catalyses carbamoyl phosphate + L-aspartate = N-carbamoyl-L-aspartate + phosphate + H(+). It participates in pyrimidine metabolism; UMP biosynthesis via de novo pathway; (S)-dihydroorotate from bicarbonate: step 2/3. Functionally, catalyzes the condensation of carbamoyl phosphate and aspartate to form carbamoyl aspartate and inorganic phosphate, the committed step in the de novo pyrimidine nucleotide biosynthesis pathway. This chain is Aspartate carbamoyltransferase catalytic subunit, found in Sulfurisphaera tokodaii (strain DSM 16993 / JCM 10545 / NBRC 100140 / 7) (Sulfolobus tokodaii).